The primary structure comprises 710 residues: Bifunctional lysine-specific demethylase and histidyl-hydroxylase NO66 (710 aa).

Residues 103-137 (TDEMNKTKKKQKKIMKKEIRKRTKRKRKSVNKREL) form a disordered region. Positions 109–132 (TKKKQKKIMKKEIRKRTKRKRKSV) are enriched in basic residues. One can recognise a JmjC domain in the interval 359 to 506 (CSIQLTNPQS…DLLERVIPPA (148 aa)). The Fe cation site is built by H405, D407, and H472.

The protein belongs to the ROX family. NO66 subfamily. Fe(2+) serves as cofactor.

The protein resides in the nucleus. It carries out the reaction N(6),N(6)-dimethyl-L-lysyl(36)-[histone H3] + 2 2-oxoglutarate + 2 O2 = L-lysyl(36)-[histone H3] + 2 formaldehyde + 2 succinate + 2 CO2. Its function is as follows. Oxygenase that can act as both a histone lysine demethylase and a ribosomal histidine hydroxylase. Specifically demethylates 'Lys-4' (H3K4me) and 'Lys-36' (H3K36me) of histone H3, thereby playing a central role in histone code. This Brugia malayi (Filarial nematode worm) protein is Bifunctional lysine-specific demethylase and histidyl-hydroxylase NO66.